Reading from the N-terminus, the 357-residue chain is Alanine racemase (357 aa).

Residue Lys-33 is the Proton acceptor; specific for D-alanine of the active site. Lys-33 bears the N6-(pyridoxal phosphate)lysine mark. Position 129 (Arg-129) interacts with substrate. Tyr-253 functions as the Proton acceptor; specific for L-alanine in the catalytic mechanism. Position 301 (Met-301) interacts with substrate.

The protein belongs to the alanine racemase family. Pyridoxal 5'-phosphate serves as cofactor.

The catalysed reaction is L-alanine = D-alanine. The protein operates within amino-acid biosynthesis; D-alanine biosynthesis; D-alanine from L-alanine: step 1/1. Functionally, catalyzes the interconversion of L-alanine and D-alanine. May also act on other amino acids. This Pseudomonas savastanoi pv. phaseolicola (strain 1448A / Race 6) (Pseudomonas syringae pv. phaseolicola (strain 1448A / Race 6)) protein is Alanine racemase (alr).